We begin with the raw amino-acid sequence, 434 residues long: UDP-N-acetylmuramate--L-alanine ligase (434 aa).

Residue G108–T114 coordinates ATP.

The protein belongs to the MurCDEF family.

The protein localises to the cytoplasm. It carries out the reaction UDP-N-acetyl-alpha-D-muramate + L-alanine + ATP = UDP-N-acetyl-alpha-D-muramoyl-L-alanine + ADP + phosphate + H(+). It functions in the pathway cell wall biogenesis; peptidoglycan biosynthesis. Cell wall formation. The chain is UDP-N-acetylmuramate--L-alanine ligase from Geobacillus thermodenitrificans (strain NG80-2).